Here is a 181-residue protein sequence, read N- to C-terminus: Ribulose bisphosphate carboxylase small subunit, chloroplastic 6 (181 aa).

A chloroplast-targeting transit peptide spans 1–57 (MASSIVSSAAVATRSNVAQASMVAPFTGLKSAASFPVTKKNNNVDITSLASNGGRVR).

Belongs to the RuBisCO small chain family. In terms of assembly, heterohexadecamer of 8 large and 8 small subunits.

The protein localises to the plastid. Its subcellular location is the chloroplast. Functionally, ruBisCO catalyzes two reactions: the carboxylation of D-ribulose 1,5-bisphosphate, the primary event in carbon dioxide fixation, as well as the oxidative fragmentation of the pentose substrate. Both reactions occur simultaneously and in competition at the same active site. Although the small subunit is not catalytic it is essential for maximal activity. The protein is Ribulose bisphosphate carboxylase small subunit, chloroplastic 6 of Solanum tuberosum (Potato).